The following is an 879-amino-acid chain: Leucine--tRNA ligase (879 aa).

The short motif at 46-56 is the 'HIGH' region element; sequence PYPSGALHMGH. The 'KMSKS' region signature appears at 638-642; the sequence is KMSKS. Lys641 is a binding site for ATP.

It belongs to the class-I aminoacyl-tRNA synthetase family.

The protein resides in the cytoplasm. The enzyme catalyses tRNA(Leu) + L-leucine + ATP = L-leucyl-tRNA(Leu) + AMP + diphosphate. The sequence is that of Leucine--tRNA ligase from Xanthomonas campestris pv. campestris (strain 8004).